Reading from the N-terminus, the 280-residue chain is Soluble inorganic pyrophosphatase 1, chloroplastic (280 aa).

Arginine 120 serves as a coordination point for diphosphate. Aspartate 152, aspartate 157, and aspartate 189 together coordinate Mg(2+).

As to quaternary structure, monomer. Mg(2+) is required as a cofactor. In terms of processing, the N-terminus is blocked.

It localises to the plastid. The protein localises to the chloroplast. It carries out the reaction diphosphate + H2O = 2 phosphate + H(+). The chain is Soluble inorganic pyrophosphatase 1, chloroplastic (ppa1) from Chlamydomonas reinhardtii (Chlamydomonas smithii).